Here is a 374-residue protein sequence, read N- to C-terminus: UDP-N-acetylglucosamine--N-acetylmuramyl-(pentapeptide) pyrophosphoryl-undecaprenol N-acetylglucosamine transferase (374 aa).

Residues 35-37, asparagine 144, arginine 185, serine 211, and glutamine 305 each bind UDP-N-acetyl-alpha-D-glucosamine; that span reads TGG.

Belongs to the glycosyltransferase 28 family. MurG subfamily.

The protein resides in the cell inner membrane. It carries out the reaction di-trans,octa-cis-undecaprenyl diphospho-N-acetyl-alpha-D-muramoyl-L-alanyl-D-glutamyl-meso-2,6-diaminopimeloyl-D-alanyl-D-alanine + UDP-N-acetyl-alpha-D-glucosamine = di-trans,octa-cis-undecaprenyl diphospho-[N-acetyl-alpha-D-glucosaminyl-(1-&gt;4)]-N-acetyl-alpha-D-muramoyl-L-alanyl-D-glutamyl-meso-2,6-diaminopimeloyl-D-alanyl-D-alanine + UDP + H(+). It participates in cell wall biogenesis; peptidoglycan biosynthesis. Cell wall formation. Catalyzes the transfer of a GlcNAc subunit on undecaprenyl-pyrophosphoryl-MurNAc-pentapeptide (lipid intermediate I) to form undecaprenyl-pyrophosphoryl-MurNAc-(pentapeptide)GlcNAc (lipid intermediate II). The chain is UDP-N-acetylglucosamine--N-acetylmuramyl-(pentapeptide) pyrophosphoryl-undecaprenol N-acetylglucosamine transferase from Trichodesmium erythraeum (strain IMS101).